Reading from the N-terminus, the 346-residue chain is KH domain-containing, RNA-binding, signal transduction-associated protein 2 (346 aa).

Residues 65–131 (LIPVQQYPKF…AKYAHLSNDL (67 aa)) enclose the KH domain. The tract at residues 175-291 (LSYLNGSDDP…SYESYDDNYS (117 aa)) is disordered. Residues 195 to 224 (LRLTSTASPRGRGSAAPPAPPGRGAAAPRG) show a composition bias toward low complexity. Acidic residues predominate over residues 268 to 287 (YGYDDGYDGEYDDQSYESYD).

It belongs to the KHDRBS family.

Its subcellular location is the nucleus. RNA-binding protein that plays a role in the regulation of alternative splicing. The sequence is that of KH domain-containing, RNA-binding, signal transduction-associated protein 2 (khdrbs2) from Danio rerio (Zebrafish).